Reading from the N-terminus, the 389-residue chain is Aspartate aminotransferase (389 aa).

The L-aspartate site is built by Gly34 and Asn171. The residue at position 233 (Lys233) is an N6-(pyridoxal phosphate)lysine. Arg362 provides a ligand contact to L-aspartate.

The protein belongs to the class-I pyridoxal-phosphate-dependent aminotransferase family. Homodimer. Pyridoxal 5'-phosphate is required as a cofactor.

Its subcellular location is the cytoplasm. The enzyme catalyses L-aspartate + 2-oxoglutarate = oxaloacetate + L-glutamate. The chain is Aspartate aminotransferase (aspC) from Pyrococcus abyssi (strain GE5 / Orsay).